Here is a 276-residue protein sequence, read N- to C-terminus: NADPH-dependent 7-cyano-7-deazaguanine reductase (276 aa).

83-85 serves as a coordination point for substrate; that stretch reads IES. Residue 85–86 coordinates NADPH; sequence SK. The active-site Thioimide intermediate is the Cys-184. Asp-191 (proton donor) is an active-site residue. 223–224 is a substrate binding site; that stretch reads HE. 252–253 lines the NADPH pocket; sequence RG.

The protein belongs to the GTP cyclohydrolase I family. QueF type 2 subfamily. Homodimer.

It is found in the cytoplasm. The catalysed reaction is 7-aminomethyl-7-carbaguanine + 2 NADP(+) = 7-cyano-7-deazaguanine + 2 NADPH + 3 H(+). The protein operates within tRNA modification; tRNA-queuosine biosynthesis. Its function is as follows. Catalyzes the NADPH-dependent reduction of 7-cyano-7-deazaguanine (preQ0) to 7-aminomethyl-7-deazaguanine (preQ1). The sequence is that of NADPH-dependent 7-cyano-7-deazaguanine reductase from Ectopseudomonas mendocina (strain ymp) (Pseudomonas mendocina).